We begin with the raw amino-acid sequence, 562 residues long: Glutamate--tRNA ligase (562 aa).

Residues 90–100 carry the 'HIGH' region motif; it reads PNPSGLLHIGH.

It belongs to the class-I aminoacyl-tRNA synthetase family. Glutamate--tRNA ligase type 2 subfamily.

The protein localises to the cytoplasm. The catalysed reaction is tRNA(Glu) + L-glutamate + ATP = L-glutamyl-tRNA(Glu) + AMP + diphosphate. Functionally, catalyzes the attachment of glutamate to tRNA(Glu) in a two-step reaction: glutamate is first activated by ATP to form Glu-AMP and then transferred to the acceptor end of tRNA(Glu). The protein is Glutamate--tRNA ligase of Nanoarchaeum equitans (strain Kin4-M).